A 210-amino-acid chain; its full sequence is Histone H1A (210 aa).

Disordered regions lie at residues 1–49 and 101–210; these read MAEA…VSEQ and KGSG…PKKK. Composition is skewed to low complexity over residues 26–45 and 129–142; these read KKAA…SGPS and PLAA…AAAK. The H15 domain occupies 42–113; sequence SGPSVSEQIV…GASGSFKLNK (72 aa). 2 stretches are compositionally biased toward basic residues: residues 143 to 153 and 160 to 180; these read KTAKSPKKPKK and SPKK…KTAV. Low complexity predominate over residues 181 to 192; sequence KPKVAAKSPAKA. Residues 193 to 210 are compositionally biased toward basic residues; the sequence is KAAKPKVAKAKKAAPKKK.

Belongs to the histone H1/H5 family.

The protein localises to the nucleus. It localises to the chromosome. Its function is as follows. Histones H1 are necessary for the condensation of nucleosome chains into higher-order structures. The sequence is that of Histone H1A from Xenopus laevis (African clawed frog).